Reading from the N-terminus, the 269-residue chain is 3-deoxy-manno-octulosonate cytidylyltransferase (269 aa).

The protein belongs to the KdsB family.

The protein resides in the cytoplasm. It carries out the reaction 3-deoxy-alpha-D-manno-oct-2-ulosonate + CTP = CMP-3-deoxy-beta-D-manno-octulosonate + diphosphate. It participates in nucleotide-sugar biosynthesis; CMP-3-deoxy-D-manno-octulosonate biosynthesis; CMP-3-deoxy-D-manno-octulosonate from 3-deoxy-D-manno-octulosonate and CTP: step 1/1. The protein operates within bacterial outer membrane biogenesis; lipopolysaccharide biosynthesis. Activates KDO (a required 8-carbon sugar) for incorporation into bacterial lipopolysaccharide in Gram-negative bacteria. This chain is 3-deoxy-manno-octulosonate cytidylyltransferase, found in Cupriavidus taiwanensis (strain DSM 17343 / BCRC 17206 / CCUG 44338 / CIP 107171 / LMG 19424 / R1) (Ralstonia taiwanensis (strain LMG 19424)).